The following is a 57-amino-acid chain: Lantibiotic nukacin (57 aa).

The propeptide occupies 1 to 30 (MENSKVMKDIEVANLLEEVQEDELNEVLGA). The beta-methyllanthionine (Thr-Cys) cross-link spans 39 to 44 (TVSHDC). 2 cross-links (lanthionine (Ser-Cys)) span residues 41–55 (SHDC…VFTC) and 48–56 (SFQFVFTCC). Residue T54 is modified to 2,3-didehydrobutyrine.

Maturation of lantibiotics involves the enzymatic conversion of Thr, and Ser into dehydrated AA and the formation of thioether bonds with cysteine. This is followed by membrane translocation and cleavage of the modified precursor.

It localises to the secreted. Functionally, lanthionine-containing peptide antibiotic (lantibiotic) active on Gram-positive bacteria. The bactericidal activity of lantibiotics is based on depolarization of energized bacterial cytoplasmic membranes, initiated by the formation of aqueous transmembrane pores. The polypeptide is Lantibiotic nukacin (Staphylococcus simulans).